The following is a 185-amino-acid chain: Peptidyl-tRNA hydrolase (185 aa).

Y14 contributes to the tRNA binding site. The active-site Proton acceptor is the H19. TRNA contacts are provided by Y64, N66, and N112.

Belongs to the PTH family. Monomer.

The protein resides in the cytoplasm. The catalysed reaction is an N-acyl-L-alpha-aminoacyl-tRNA + H2O = an N-acyl-L-amino acid + a tRNA + H(+). In terms of biological role, hydrolyzes ribosome-free peptidyl-tRNAs (with 1 or more amino acids incorporated), which drop off the ribosome during protein synthesis, or as a result of ribosome stalling. Functionally, catalyzes the release of premature peptidyl moieties from peptidyl-tRNA molecules trapped in stalled 50S ribosomal subunits, and thus maintains levels of free tRNAs and 50S ribosomes. This Shouchella clausii (strain KSM-K16) (Alkalihalobacillus clausii) protein is Peptidyl-tRNA hydrolase.